Here is a 92-residue protein sequence, read N- to C-terminus: Large ribosomal subunit protein eL43 (92 aa).

Zn(2+) contacts are provided by cysteine 39, cysteine 42, cysteine 57, and cysteine 60. The segment at 39–60 adopts a C4-type zinc-finger fold; it reads CPVCGFPKLKRASTSIWVCGKC.

Belongs to the eukaryotic ribosomal protein eL43 family. Putative zinc-binding subfamily. In terms of assembly, part of the 50S ribosomal subunit. Zn(2+) is required as a cofactor.

Its function is as follows. Binds to the 23S rRNA. In Methanocaldococcus jannaschii (strain ATCC 43067 / DSM 2661 / JAL-1 / JCM 10045 / NBRC 100440) (Methanococcus jannaschii), this protein is Large ribosomal subunit protein eL43.